The sequence spans 449 residues: Exodeoxyribonuclease 7 large subunit (449 aa).

This sequence belongs to the XseA family. In terms of assembly, heterooligomer composed of large and small subunits.

The protein localises to the cytoplasm. It catalyses the reaction Exonucleolytic cleavage in either 5'- to 3'- or 3'- to 5'-direction to yield nucleoside 5'-phosphates.. Its function is as follows. Bidirectionally degrades single-stranded DNA into large acid-insoluble oligonucleotides, which are then degraded further into small acid-soluble oligonucleotides. This chain is Exodeoxyribonuclease 7 large subunit, found in Salmonella typhi.